The primary structure comprises 394 residues: Flap endonuclease 1-A (394 aa).

The N-domain stretch occupies residues 1–105 (MGIKGLTKLI…RELAKRFARR (105 aa)). Aspartate 34 lines the Mg(2+) pocket. Arginine 71 is a binding site for DNA. 5 residues coordinate Mg(2+): aspartate 87, glutamate 159, glutamate 161, aspartate 180, and aspartate 182. Residues 123-254 (DVEKYSKKTV…QTALKMIRQH (132 aa)) are I-domain. Glutamate 159 contacts DNA. Residues glycine 232 and aspartate 234 each coordinate DNA. Aspartate 234 is a Mg(2+) binding site. The interval 338 to 346 (SQGRLESFF) is interaction with PCNA. The tract at residues 343-394 (ESFFGVSSSSSNKRKEAPDSEASAGKQVKTAAAVKPAKAASKKGPAKGGKKK) is disordered. Low complexity predominate over residues 368–381 (KQVKTAAAVKPAKA). Over residues 382–394 (ASKKGPAKGGKKK) the composition is skewed to basic residues.

Belongs to the XPG/RAD2 endonuclease family. FEN1 subfamily. In terms of assembly, interacts with PCNA. Three molecules of FEN1 bind to one PCNA trimer with each molecule binding to one PCNA monomer. PCNA stimulates the nuclease activity without altering cleavage specificity. It depends on Mg(2+) as a cofactor. Phosphorylated. Phosphorylation upon DNA damage induces relocalization to the nuclear plasma.

It is found in the nucleus. It localises to the nucleolus. The protein localises to the nucleoplasm. The protein resides in the mitochondrion. In terms of biological role, structure-specific nuclease with 5'-flap endonuclease and 5'-3' exonuclease activities involved in DNA replication and repair. During DNA replication, cleaves the 5'-overhanging flap structure that is generated by displacement synthesis when DNA polymerase encounters the 5'-end of a downstream Okazaki fragment. It enters the flap from the 5'-end and then tracks to cleave the flap base, leaving a nick for ligation. Also involved in the long patch base excision repair (LP-BER) pathway, by cleaving within the apurinic/apyrimidinic (AP) site-terminated flap. Acts as a genome stabilization factor that prevents flaps from equilibrating into structures that lead to duplications and deletions. Also possesses 5'-3' exonuclease activity on nicked or gapped double-stranded DNA, and exhibits RNase H activity. Also involved in replication and repair of rDNA and in repairing mitochondrial DNA. This chain is Flap endonuclease 1-A, found in Physcomitrium patens (Spreading-leaved earth moss).